The following is a 413-amino-acid chain: Serine protease inhibitor A3L (413 aa).

A signal peptide spans 1–28 (MAFIAALGLLMAGICPAVLCDGTLGRDT). At Ser30 the chain carries Phosphoserine. N-linked (GlcNAc...) asparagine glycosylation is found at Asn102, Asn182, Asn220, and Asn267. The segment at 365 to 389 (GTEATAATGVATVIRRQPRTLNFNR) is RCL.

The protein belongs to the serpin family. Post-translationally, N-glycosylated. In terms of tissue distribution, liver.

Its subcellular location is the secreted. The chain is Serine protease inhibitor A3L (Serpina3l) from Rattus norvegicus (Rat).